Here is a 194-residue protein sequence, read N- to C-terminus: Imidazoleglycerol-phosphate dehydratase (194 aa).

Belongs to the imidazoleglycerol-phosphate dehydratase family.

It localises to the cytoplasm. It carries out the reaction D-erythro-1-(imidazol-4-yl)glycerol 3-phosphate = 3-(imidazol-4-yl)-2-oxopropyl phosphate + H2O. It functions in the pathway amino-acid biosynthesis; L-histidine biosynthesis; L-histidine from 5-phospho-alpha-D-ribose 1-diphosphate: step 6/9. This is Imidazoleglycerol-phosphate dehydratase from Limosilactobacillus fermentum (strain NBRC 3956 / LMG 18251) (Lactobacillus fermentum).